A 324-amino-acid polypeptide reads, in one-letter code: MSSSEQLDDGFTGLKVIAKTEIAQGIFRFELAHPQGMLLPAFTAGAHLRVRVPNGSIRNYSLSNDPQERERYVIAVKRDANGRGGSVSMADDIEAGDLLPVATPQNEFELIENARQFIFVAGGIGITPILSMMRHLKASTDLPFKLYYCTRNPELTAFRDELLGAEFANTVVIHHDFGNRADAYDFWPVFDKPSSGTHVYCCGPRPLMDSVLDMTGHWPPGSIHFESFGVDQSRFAENRPFSVTLGRSGIDLEIPVDRSILEVLRDNGIRAPSSCESGTCGSCRTRLIEGDVEHRDMVLREDEQHDQIMICVSRARNDVLVLDL.

In terms of domain architecture, FAD-binding FR-type spans 9–111 (DGFTGLKVIA…ATPQNEFELI (103 aa)). Residue 115-229 (RQFIFVAGGI…PGSIHFESFG (115 aa)) participates in NAD(+) binding. The 84-residue stretch at 241–324 (FSVTLGRSGI…ARNDVLVLDL (84 aa)) folds into the 2Fe-2S ferredoxin-type domain. Residues Cys275, Cys280, Cys283, and Cys311 each contribute to the [2Fe-2S] cluster site.

Belongs to the PDR/VanB family. In terms of assembly, this dioxygenase system consists of two proteins: phthalate oxygenase and phthalate oxygenase reductase. Requires FMN as cofactor.

The enzyme catalyses phthalate + NADH + O2 + H(+) = cis-4,5-dihydroxycyclohexa-2,6-diene-1,2-dicarboxylate + NAD(+). Its pathway is xenobiotic degradation; phthalate degradation; 3,4-dihydroxybenzoate from phthalate: step 1/3. This is Phthalate 4,5-dioxygenase oxygenase reductase subunit (pht2) from Pseudomonas putida (Arthrobacter siderocapsulatus).